Consider the following 261-residue polypeptide: Small ribosomal subunit protein eS4 (261 aa).

The S4 RNA-binding domain maps to 42 to 104 (LPLVIFLRNR…TGEFFRLIYD (63 aa)).

Belongs to the eukaryotic ribosomal protein eS4 family.

The protein is Small ribosomal subunit protein eS4 (RpS4) of Carabus granulatus (Ground beetle).